The sequence spans 257 residues: Probable 6-phosphogluconolactonase (257 aa).

It belongs to the glucosamine/galactosamine-6-phosphate isomerase family. 6-phosphogluconolactonase subfamily.

The enzyme catalyses 6-phospho-D-glucono-1,5-lactone + H2O = 6-phospho-D-gluconate + H(+). Its pathway is carbohydrate degradation; pentose phosphate pathway; D-ribulose 5-phosphate from D-glucose 6-phosphate (oxidative stage): step 2/3. In terms of biological role, hydrolysis of 6-phosphogluconolactone to 6-phosphogluconate. This Schizosaccharomyces pombe (strain 972 / ATCC 24843) (Fission yeast) protein is Probable 6-phosphogluconolactonase.